The sequence spans 417 residues: NADH-quinone oxidoreductase subunit D (417 aa).

Belongs to the complex I 49 kDa subunit family. As to quaternary structure, NDH-1 is composed of 14 different subunits. Subunits NuoB, C, D, E, F, and G constitute the peripheral sector of the complex.

The protein resides in the cell inner membrane. The enzyme catalyses a quinone + NADH + 5 H(+)(in) = a quinol + NAD(+) + 4 H(+)(out). In terms of biological role, NDH-1 shuttles electrons from NADH, via FMN and iron-sulfur (Fe-S) centers, to quinones in the respiratory chain. The immediate electron acceptor for the enzyme in this species is believed to be ubiquinone. Couples the redox reaction to proton translocation (for every two electrons transferred, four hydrogen ions are translocated across the cytoplasmic membrane), and thus conserves the redox energy in a proton gradient. This is NADH-quinone oxidoreductase subunit D from Burkholderia vietnamiensis (strain G4 / LMG 22486) (Burkholderia cepacia (strain R1808)).